Consider the following 190-residue polypeptide: Ribose 1,5-bisphosphate phosphokinase PhnN (190 aa).

19–26 (GPSGVGKD) contributes to the ATP binding site.

The protein belongs to the ribose 1,5-bisphosphokinase family.

The enzyme catalyses alpha-D-ribose 1,5-bisphosphate + ATP = 5-phospho-alpha-D-ribose 1-diphosphate + ADP. It functions in the pathway metabolic intermediate biosynthesis; 5-phospho-alpha-D-ribose 1-diphosphate biosynthesis; 5-phospho-alpha-D-ribose 1-diphosphate from D-ribose 5-phosphate (route II): step 3/3. Functionally, catalyzes the phosphorylation of ribose 1,5-bisphosphate to 5-phospho-D-ribosyl alpha-1-diphosphate (PRPP). This Ruegeria sp. (strain TM1040) (Silicibacter sp.) protein is Ribose 1,5-bisphosphate phosphokinase PhnN.